Consider the following 1159-residue polypeptide: Ferroxidase HEPHL1 (1159 aa).

Positions 1–24 (MPRKQPAGCIFLLTFLGLSGLVGT) are cleaved as a signal peptide. Plastocyanin-like domains lie at 25 to 207 (VTRT…LLVC), 218 to 366 (TRND…VDNC), 379 to 561 (QRRY…LLVC), 571 to 719 (TQKG…VSSC), 731 to 907 (MIRT…LITC), and 915 to 1092 (KGRR…VPSN). At 25–1114 (VTRTYYIGIV…KNLGPTGAKA (1090 aa)) the chain is on the extracellular side. The Cu cation site is built by H127 and H129. A glycan (N-linked (GlcNAc...) asparagine) is linked at N161. A disulfide bond links C181 and C207. Cu cation contacts are provided by H187 and H189. N236 is a glycosylation site (N-linked (GlcNAc...) asparagine). A disulfide bridge links C285 with C366. 3 residues coordinate Cu cation: H304, C347, and H352. An N-linked (GlcNAc...) asparagine glycan is attached at N407. The cysteines at positions 535 and 561 are disulfide-linked. N589 carries N-linked (GlcNAc...) asparagine glycosylation. A disulfide bridge links C638 with C719. H657, C700, H705, and M710 together coordinate Cu cation. N-linked (GlcNAc...) asparagine glycosylation is present at N772. C881 and C907 are oxidised to a cystine. N935 is a glycosylation site (N-linked (GlcNAc...) asparagine). The Cu cation site is built by H1003, H1006, H1008, H1048, C1049, H1050, H1054, and M1059. Residues 1115 to 1135 (ALVILFIIGLLLLITTVILSL) traverse the membrane as a helical segment. Over 1136 to 1159 (RLCSAMKQTDYQQVQSCALPTDAL) the chain is Cytoplasmic.

This sequence belongs to the multicopper oxidase family. Requires Cu cation as cofactor.

The protein resides in the membrane. It carries out the reaction 4 Fe(2+) + O2 + 4 H(+) = 4 Fe(3+) + 2 H2O. Its function is as follows. Is a copper-binding glycoprotein with ferroxidase activity. It oxidizes Fe(2+) to Fe(3+) without releasing radical oxygen species. May be involved in the regulation of intracellular iron content. This Homo sapiens (Human) protein is Ferroxidase HEPHL1 (HEPHL1).